The following is a 271-amino-acid chain: 5'-AMP-activated protein kinase subunit beta-2 (271 aa).

Residues 1–47 (MGNTTSERVSGERHGAKAARAEGGGHGPGKEHKIMVGSTDDPSVFSL) form a disordered region. Ser-38 carries the phosphoserine; by ULK1 modification. Thr-39 bears the Phosphothreonine; by ULK1 mark. The residue at position 68 (Ser-68) is a Phosphoserine; by ULK1. 2 positions are modified to phosphoserine: Ser-94 and Ser-107. Thr-147 carries the post-translational modification Phosphothreonine. Ser-157 and Ser-169 each carry phosphoserine. The residue at position 173 (Ser-173) is a Phosphoserine; by ULK1. At Ser-183 the chain carries Phosphoserine.

The protein belongs to the 5'-AMP-activated protein kinase beta subunit family. AMPK is a heterotrimer of an alpha catalytic subunit (PRKAA1 or PRKAA2), a beta (PRKAB1 or PRKAB2) and a gamma non-catalytic subunits (PRKAG1, PRKAG2 or PRKAG3). In terms of processing, phosphorylated when associated with the catalytic subunit (PRKAA1 or PRKAA2). Phosphorylated by ULK1 and ULK2; leading to negatively regulate AMPK activity and suggesting the existence of a regulatory feedback loop between ULK1, ULK2 and AMPK.

Its function is as follows. Non-catalytic subunit of AMP-activated protein kinase (AMPK), an energy sensor protein kinase that plays a key role in regulating cellular energy metabolism. In response to reduction of intracellular ATP levels, AMPK activates energy-producing pathways and inhibits energy-consuming processes: inhibits protein, carbohydrate and lipid biosynthesis, as well as cell growth and proliferation. AMPK acts via direct phosphorylation of metabolic enzymes, and by longer-term effects via phosphorylation of transcription regulators. Also acts as a regulator of cellular polarity by remodeling the actin cytoskeleton; probably by indirectly activating myosin. Beta non-catalytic subunit acts as a scaffold on which the AMPK complex assembles, via its C-terminus that bridges alpha (PRKAA1 or PRKAA2) and gamma subunits (PRKAG1, PRKAG2 or PRKAG3). The protein is 5'-AMP-activated protein kinase subunit beta-2 (Prkab2) of Rattus norvegicus (Rat).